Here is a 338-residue protein sequence, read N- to C-terminus: GDSL esterase/lipase At5g63170 (338 aa).

A signal peptide spans 1–23; that stretch reads MNSLVIQTTIVLVSVISVSIVHA. The active-site Nucleophile is Ser35. Residues Asp313 and His316 contribute to the active site.

Belongs to the 'GDSL' lipolytic enzyme family.

The protein resides in the secreted. The chain is GDSL esterase/lipase At5g63170 from Arabidopsis thaliana (Mouse-ear cress).